Reading from the N-terminus, the 173-residue chain is Large ribosomal subunit protein uL16 (173 aa).

This sequence belongs to the universal ribosomal protein uL16 family.

In Methanosphaerula palustris (strain ATCC BAA-1556 / DSM 19958 / E1-9c), this protein is Large ribosomal subunit protein uL16.